The sequence spans 208 residues: Calcyphosin-like protein (208 aa).

4 EF-hand domains span residues Ala39 to Val74, Met75 to Arg110, Ala111 to Pro146, and Thr154 to Ser191. Asp52, Asn54, Asn56, Thr58, Glu63, Asp88, Asp90, Ser92, Thr94, and Glu99 together coordinate Ca(2+).

It is found in the cytoplasm. This chain is Calcyphosin-like protein (Capsl), found in Mus musculus (Mouse).